We begin with the raw amino-acid sequence, 243 residues long: Toxin CcTX-1 (243 aa).

Residues 1 to 25 (SSPEKKNDMSKPGRMRFDNKKEPRS) show a composition bias toward basic and acidic residues. Residues 1–48 (SSPEKKNDMSKPGRMRFDNKKEPRSSAKNSGNGYGCVDVNAGREPLTG) are disordered.

In terms of processing, contains disulfide bonds. In terms of tissue distribution, nematocytes.

It localises to the secreted. The protein resides in the nematocyst. It is found in the target cell membrane. Has potent hemolytic activity. Is lethal to crayfish. Causes cutaneous inflammation in humans. May act as a pore-forming toxin, disrupting normal transmembrane ion concentration gradients in susceptible cells. This is Toxin CcTX-1 from Cyanea capillata (Lion's mane jellyfish).